Consider the following 570-residue polypeptide: Pre-mRNA 3'-end-processing factor FIP1 (570 aa).

Residues 1–10 are compositionally biased toward basic and acidic residues; the sequence is MSAEEADKTT. The disordered stretch occupies residues 1–107; the sequence is MSAEEADKTT…SDDDDDDVRV (107 aa). Residues 16–38 are compositionally biased toward acidic residues; it reads AGDEEEEWLYGDEGESKETEEEE. Residues 56–77 show a composition bias toward low complexity; it reads DAPTTTNNSSDSATPPTTTTTT. Residues 87–104 are compositionally biased toward acidic residues; it reads APGEDEDSESDSDDDDDD. At threonine 125 the chain carries Phosphothreonine. At serine 247 the chain carries Phosphoserine. Disordered regions lie at residues 300–328, 371–400, and 418–570; these read RRRH…VQKM, PNFP…YDGR, and GAVN…EAME. A compositionally biased stretch (pro residues) spans 371-384; it reads PNFPPPTGGPPPSL. Composition is skewed to basic and acidic residues over residues 436 to 462 and 476 to 506; these read YPRR…RDHS and DEER…EERH. Composition is skewed to basic residues over residues 520–529 and 538–548; these read KSSRSSSRRR and HRRHKHKKSKR. Positions 549 to 562 are enriched in basic and acidic residues; it reads SKEGKEPSEERSAD.

It belongs to the FIP1 family.

It is found in the nucleus. Involved in mRNA processing. In Danio rerio (Zebrafish), this protein is Pre-mRNA 3'-end-processing factor FIP1 (fip1l1).